Consider the following 100-residue polypeptide: MASVNIKPLEDKILVQANEAETTTASGLVIPDTAKEKPQEGTVVAVGPGRWDEDGEKRIPLDVQEGDTVIYSKYGGTEIKYQGEEYLILSARDVLAVVGK.

Belongs to the GroES chaperonin family. In terms of assembly, heptamer of 7 subunits arranged in a ring. Interacts with the chaperonin GroEL.

It localises to the cytoplasm. Its function is as follows. Together with the chaperonin GroEL, plays an essential role in assisting protein folding. The GroEL-GroES system forms a nano-cage that allows encapsulation of the non-native substrate proteins and provides a physical environment optimized to promote and accelerate protein folding. GroES binds to the apical surface of the GroEL ring, thereby capping the opening of the GroEL channel. This Nocardia farcinica (strain IFM 10152) protein is Co-chaperonin GroES.